The following is a 416-amino-acid chain: Orexin/Hypocretin receptor type 1 (416 aa).

The interval 1 to 22 (MEPSATPGAQPGVPTSSGEPFH) is disordered. The Extracellular segment spans residues 1-46 (MEPSATPGAQPGVPTSSGEPFHLPPDYEDEFLRYLWRDYLYPKQYE). Residues 26–41 (DYEDEFLRYLWRDYLY) are required for response to orexin-A. The helical transmembrane segment at 47–67 (WVLIAAYVAVFLIALVGNTLV) threads the bilayer. At 68–82 (CLAVWRNHHMRTVTN) the chain is on the cytoplasmic side. Residues 83-105 (YFIVNLSLADVLVTAICLPASLL) form a helical membrane-spanning segment. Topologically, residues 106–119 (VDITESWLFGQALC) are extracellular. A disulfide bond links cysteine 119 and cysteine 202. Residues 120–140 (KVIPYLQAVSVSVAVLTLSFI) form a helical membrane-spanning segment. Over 141–160 (ALDRWYAICHPLLFKSTARR) the chain is Cytoplasmic. The chain crosses the membrane as a helical span at residues 161–182 (ARGSILGIWAVSLAVMVPQAAV). Over 183-213 (MECSSVLPELANRTRLFSVCDEHWADELYPK) the chain is Extracellular. N-linked (GlcNAc...) asparagine glycosylation is present at asparagine 194. A helical transmembrane segment spans residues 214-235 (IYHSCFFIVTYLAPLGLMAMAY). Over 236–298 (FQIFRKLWGR…QMRARRKTAK (63 aa)) the chain is Cytoplasmic. A helical transmembrane segment spans residues 299 to 321 (MLMVVLLVFALCYLPISVLNVLK). The Extracellular portion of the chain corresponds to 322–336 (RVFGMFRQASDREAV). Residues 337–360 (YACFTFSHWLVYANSAANPIIYNF) form a helical membrane-spanning segment. Over 361 to 416 (LSGKFREQFKAAFSCCLPGLGPGSSARHKSLSLQSRCSVSKVSEHVVLTTVTTVLS) the chain is Cytoplasmic.

The protein belongs to the G-protein coupled receptor 1 family. As to expression, widely expressed.

It localises to the cell membrane. Functionally, moderately selective excitatory receptor for orexin-A and, with a lower affinity, for orexin-B neuropeptide. Triggers an increase in cytoplasmic Ca(2+) levels in response to orexin-A binding. This is Orexin/Hypocretin receptor type 1 from Mus musculus (Mouse).